A 155-amino-acid polypeptide reads, in one-letter code: 6,7-dimethyl-8-ribityllumazine synthase (155 aa).

5-amino-6-(D-ribitylamino)uracil-binding positions include F24, 58-60 (AFE), and 82-84 (VLI). (2S)-2-hydroxy-3-oxobutyl phosphate is bound at residue 87-88 (AT). The active-site Proton donor is H90. 5-amino-6-(D-ribitylamino)uracil is bound at residue F115. R129 lines the (2S)-2-hydroxy-3-oxobutyl phosphate pocket.

It belongs to the DMRL synthase family.

The enzyme catalyses (2S)-2-hydroxy-3-oxobutyl phosphate + 5-amino-6-(D-ribitylamino)uracil = 6,7-dimethyl-8-(1-D-ribityl)lumazine + phosphate + 2 H2O + H(+). Its pathway is cofactor biosynthesis; riboflavin biosynthesis; riboflavin from 2-hydroxy-3-oxobutyl phosphate and 5-amino-6-(D-ribitylamino)uracil: step 1/2. In terms of biological role, catalyzes the formation of 6,7-dimethyl-8-ribityllumazine by condensation of 5-amino-6-(D-ribitylamino)uracil with 3,4-dihydroxy-2-butanone 4-phosphate. This is the penultimate step in the biosynthesis of riboflavin. In Chloroherpeton thalassium (strain ATCC 35110 / GB-78), this protein is 6,7-dimethyl-8-ribityllumazine synthase.